The primary structure comprises 373 residues: Queuine tRNA-ribosyltransferase (373 aa).

Asp93 serves as the catalytic Proton acceptor. Substrate contacts are provided by residues 93–97 (DSGGF), Asp147, Gln190, and Gly219. The segment at 250-256 (GVGEPVD) is RNA binding. Asp269 acts as the Nucleophile in catalysis. The tract at residues 274–278 (TRLAR) is RNA binding; important for wobble base 34 recognition. 4 residues coordinate Zn(2+): Cys307, Cys309, Cys312, and His338.

Belongs to the queuine tRNA-ribosyltransferase family. Homodimer. Within each dimer, one monomer is responsible for RNA recognition and catalysis, while the other monomer binds to the replacement base PreQ1. Zn(2+) serves as cofactor.

The catalysed reaction is 7-aminomethyl-7-carbaguanine + guanosine(34) in tRNA = 7-aminomethyl-7-carbaguanosine(34) in tRNA + guanine. It participates in tRNA modification; tRNA-queuosine biosynthesis. Catalyzes the base-exchange of a guanine (G) residue with the queuine precursor 7-aminomethyl-7-deazaguanine (PreQ1) at position 34 (anticodon wobble position) in tRNAs with GU(N) anticodons (tRNA-Asp, -Asn, -His and -Tyr). Catalysis occurs through a double-displacement mechanism. The nucleophile active site attacks the C1' of nucleotide 34 to detach the guanine base from the RNA, forming a covalent enzyme-RNA intermediate. The proton acceptor active site deprotonates the incoming PreQ1, allowing a nucleophilic attack on the C1' of the ribose to form the product. After dissociation, two additional enzymatic reactions on the tRNA convert PreQ1 to queuine (Q), resulting in the hypermodified nucleoside queuosine (7-(((4,5-cis-dihydroxy-2-cyclopenten-1-yl)amino)methyl)-7-deazaguanosine). The chain is Queuine tRNA-ribosyltransferase from Fusobacterium nucleatum subsp. nucleatum (strain ATCC 25586 / DSM 15643 / BCRC 10681 / CIP 101130 / JCM 8532 / KCTC 2640 / LMG 13131 / VPI 4355).